Consider the following 372-residue polypeptide: NAD(P)H-quinone oxidoreductase subunit 1 (372 aa).

A run of 8 helical transmembrane segments spans residues 27–47 (LLWI…GVLV), 97–117 (VLFT…WLIV), 128–148 (VGIG…GLLM), 166–186 (AAQS…IVMM), 204–224 (FLSW…ICAL), 266–286 (VLSA…PISI), 308–328 (SLGI…AILL), and 347–367 (FLLP…LAFP).

The protein belongs to the complex I subunit 1 family. As to quaternary structure, NDH-1 is composed of at least 11 different subunits.

The protein localises to the cellular thylakoid membrane. The enzyme catalyses a plastoquinone + NADH + (n+1) H(+)(in) = a plastoquinol + NAD(+) + n H(+)(out). It carries out the reaction a plastoquinone + NADPH + (n+1) H(+)(in) = a plastoquinol + NADP(+) + n H(+)(out). In terms of biological role, NDH-1 shuttles electrons from an unknown electron donor, via FMN and iron-sulfur (Fe-S) centers, to quinones in the respiratory and/or the photosynthetic chain. The immediate electron acceptor for the enzyme in this species is believed to be plastoquinone. Couples the redox reaction to proton translocation, and thus conserves the redox energy in a proton gradient. This chain is NAD(P)H-quinone oxidoreductase subunit 1, found in Prochlorococcus marinus (strain NATL2A).